The sequence spans 985 residues: UPF0182 protein Cgl0786/cg0896 (985 aa).

7 consecutive transmembrane segments (helical) span residues 19-39 (VTWIFAIIALVILIAPMSVGF), 63-83 (IVLFVIFALIAGFVTWLAGYF), 115-135 (VMVIIPIFVALLAGLIGQRSW), 176-196 (SMMLIVAFLIALVGHYLMGGI), 215-235 (TQLAVTAGLWMLVKVAGYWLD), 262-282 (KIILLVIALFVAIAFFSAIFL), and 290-310 (LAVVLMLLSSVIIGAAWPLML). The segment at 904 to 944 (KEAQDIEEVDGTATTPSTDETDTDTDQPATETPTAPVSEAE) is disordered. The span at 929-939 (DQPATETPTAP) shows a compositional bias: low complexity.

It belongs to the UPF0182 family.

The protein localises to the cell membrane. The chain is UPF0182 protein Cgl0786/cg0896 from Corynebacterium glutamicum (strain ATCC 13032 / DSM 20300 / JCM 1318 / BCRC 11384 / CCUG 27702 / LMG 3730 / NBRC 12168 / NCIMB 10025 / NRRL B-2784 / 534).